The following is a 382-amino-acid chain: UDP-4-amino-4-deoxy-L-arabinose--oxoglutarate aminotransferase (382 aa).

Lysine 182 carries the post-translational modification N6-(pyridoxal phosphate)lysine.

The protein belongs to the DegT/DnrJ/EryC1 family. ArnB subfamily. As to quaternary structure, homodimer. The cofactor is pyridoxal 5'-phosphate.

The catalysed reaction is UDP-4-amino-4-deoxy-beta-L-arabinose + 2-oxoglutarate = UDP-beta-L-threo-pentopyranos-4-ulose + L-glutamate. It participates in nucleotide-sugar biosynthesis; UDP-4-deoxy-4-formamido-beta-L-arabinose biosynthesis; UDP-4-deoxy-4-formamido-beta-L-arabinose from UDP-alpha-D-glucuronate: step 2/3. Its pathway is bacterial outer membrane biogenesis; lipopolysaccharide biosynthesis. In terms of biological role, catalyzes the conversion of UDP-4-keto-arabinose (UDP-Ara4O) to UDP-4-amino-4-deoxy-L-arabinose (UDP-L-Ara4N). The modified arabinose is attached to lipid A and is required for resistance to polymyxin and cationic antimicrobial peptides. The sequence is that of UDP-4-amino-4-deoxy-L-arabinose--oxoglutarate aminotransferase from Pectobacterium carotovorum subsp. carotovorum (strain PC1).